We begin with the raw amino-acid sequence, 136 residues long: Protein NrdI (136 aa).

Belongs to the NrdI family.

Its function is as follows. Probably involved in ribonucleotide reductase function. This chain is Protein NrdI, found in Klebsiella pneumoniae subsp. pneumoniae (strain ATCC 700721 / MGH 78578).